A 171-amino-acid polypeptide reads, in one-letter code: Protein phosphatase 1 regulatory subunit 1A (171 aa).

Position 1 is an N-acetylmethionine (methionine 1). Positions 1 to 171 are disordered; the sequence is MEQDNSPRKI…PLDSKGANSV (171 aa). Residues 9-12 are essential for activity; sequence KIQF. Basic and acidic residues predominate over residues 19-29; sequence PHLDPEAAEQI. At threonine 35 the chain carries Phosphothreonine; by PKA. The tract at residues 42-54 is essential for activity; that stretch reads TSDQSSPEIDEDR. Residues serine 43, serine 46, serine 47, and serine 67 each carry the phosphoserine modification. Basic and acidic residues predominate over residues 135–157; it reads KTAECIPKTHERGSKEPSTKEPS. Residues 143-171 are interaction with PPP1R15A; sequence THERGSKEPSTKEPSTHIPPLDSKGANSV.

It belongs to the protein phosphatase inhibitor 1 family. As to quaternary structure, interacts with PPP1R15A. Post-translationally, phosphorylation of Thr-35 is required for activity.

In terms of biological role, inhibitor of protein-phosphatase 1. This protein may be important in hormonal control of glycogen metabolism. Hormones that elevate intracellular cAMP increase I-1 activity in many tissues. I-1 activation may impose cAMP control over proteins that are not directly phosphorylated by PKA. Following a rise in intracellular calcium, I-1 is inactivated by calcineurin (or PP2B). Does not inhibit type-2 phosphatases. This chain is Protein phosphatase 1 regulatory subunit 1A (PPP1R1A), found in Homo sapiens (Human).